We begin with the raw amino-acid sequence, 157 residues long: Transcriptional repressor NrdR (157 aa).

Residues 1-22 (MKCPYCSSPDSRVINSRPSDDG) are disordered. A zinc finger lies at 3–34 (CPYCSSPDSRVINSRPSDDGASIRRRRECLTC). Polar residues predominate over residues 8 to 17 (SPDSRVINSR). Residues 49 to 136 (LMVVKRSGVR…VYRDFDSLER (88 aa)) enclose the ATP-cone domain.

Belongs to the NrdR family. It depends on Zn(2+) as a cofactor.

Functionally, negatively regulates transcription of bacterial ribonucleotide reductase nrd genes and operons by binding to NrdR-boxes. The chain is Transcriptional repressor NrdR from Deinococcus radiodurans (strain ATCC 13939 / DSM 20539 / JCM 16871 / CCUG 27074 / LMG 4051 / NBRC 15346 / NCIMB 9279 / VKM B-1422 / R1).